The primary structure comprises 757 residues: Amine oxidase [copper-containing] 2 (757 aa).

Over 1–4 (MNLK) the chain is Cytoplasmic. A helical transmembrane segment spans residues 5-25 (VLLLLLGLSFLTVFALVYVLL). The Extracellular portion of the chain corresponds to 26–757 (TRQGSFSQSP…NLPSFSYEGL (732 aa)). N-linked (GlcNAc...) asparagine glycans are attached at residues Asn133, Asn198, and Asn226. Asp381 functions as the Proton acceptor in the catalytic mechanism. A disulfide bridge links Cys399 with Cys425. The active-site Schiff-base intermediate with substrate; via topaquinone is the Tyr466. The residue at position 466 (Tyr466) is a 2',4',5'-topaquinone. The Cu(2+) site is built by His517 and His519. Ca(2+) is bound by residues Asp526, Leu527, Asp528, Glu569, Glu638, Phe660, and Asn662. A glycan (N-linked (GlcNAc...) asparagine) is linked at Asn663. Residues Glu664, Asp670, and Leu671 each coordinate Ca(2+). Position 681 (His681) interacts with Cu(2+). A disulfide bridge connects residues Cys731 and Cys738.

Belongs to the copper/topaquinone oxidase family. In terms of assembly, homodimer; disulfide-linked. Probably forms heterodimers with AOC3. It depends on Cu(2+) as a cofactor. Ca(2+) is required as a cofactor. The cofactor is L-topaquinone. Post-translationally, topaquinone (TPQ) is generated by copper-dependent autoxidation of a specific tyrosyl residue. As to expression, significantly much highly expressed in retina.

The protein localises to the cell membrane. The catalysed reaction is 2-phenylethylamine + O2 + H2O = 2-phenylacetaldehyde + H2O2 + NH4(+). It carries out the reaction tryptamine + O2 + H2O = indole-3-acetaldehyde + H2O2 + NH4(+). The enzyme catalyses tyramine + O2 + H2O = (4-hydroxyphenyl)acetaldehyde + H2O2 + NH4(+). Catalyzes the oxidative deamination of primary amines to the corresponding aldehydes with the concomitant production of hydrogen peroxide and ammonia. Has a preference for 2-phenylethylamine, tryptamine and tyramine. Could also act on methylamine and benzylamine but much less efficiently. This chain is Amine oxidase [copper-containing] 2, found in Mus musculus (Mouse).